The primary structure comprises 294 residues: Protoheme IX farnesyltransferase (294 aa).

The next 9 membrane-spanning stretches (helical) occupy residues 25–45, 48–68, 92–112, 115–135, 141–161, 170–190, 216–236, 240–260, and 272–292; these read SLVL…MGAV, LVTL…NCYW, AVAL…LALG, VLTA…YTPL, AAML…WTAV, FSLF…IALF, VVLY…LHIA, YLAA…WGFF, and FFFS…DRVP.

This sequence belongs to the UbiA prenyltransferase family. Protoheme IX farnesyltransferase subfamily.

The protein localises to the cell inner membrane. It catalyses the reaction heme b + (2E,6E)-farnesyl diphosphate + H2O = Fe(II)-heme o + diphosphate. Its pathway is porphyrin-containing compound metabolism; heme O biosynthesis; heme O from protoheme: step 1/1. Functionally, converts heme B (protoheme IX) to heme O by substitution of the vinyl group on carbon 2 of heme B porphyrin ring with a hydroxyethyl farnesyl side group. The protein is Protoheme IX farnesyltransferase of Myxococcus xanthus (strain DK1622).